The primary structure comprises 253 residues: tRNA pseudouridine synthase A (253 aa).

Catalysis depends on aspartate 53, which acts as the Nucleophile. Position 111 (tyrosine 111) interacts with substrate.

The protein belongs to the tRNA pseudouridine synthase TruA family. Homodimer.

The enzyme catalyses uridine(38/39/40) in tRNA = pseudouridine(38/39/40) in tRNA. Functionally, formation of pseudouridine at positions 38, 39 and 40 in the anticodon stem and loop of transfer RNAs. This Chlorobium luteolum (strain DSM 273 / BCRC 81028 / 2530) (Pelodictyon luteolum) protein is tRNA pseudouridine synthase A.